A 580-amino-acid polypeptide reads, in one-letter code: MPPIKRSKPDGGVKKISITATDVTPAKGVEEKMSWKEYKKMKQHTGGGTRNKLKKKQRPPTENTEGRAKKPKVLTKEQLERHDTGADQIDPSSMRSKLQQEKMKVTKDKFQRRIEATAKAEKRLVENTGFVAPDEEDHSLTYSIRQKDIAESVDLAAATKHFELKLPRFGPYHIDYTDNGRHLVIGGRKGHLAALDWQTKHLHFEQSVMEKVSDVKFLHTENFIAVAQKNYTYVYDNLGTELHCLKTMYDTARLEFLPHHFLLVGSSRNSFLNYVDVSVGKQVASFATKSGTLDVMCQNPANAIIHTGHTNGTVSLWSPNSKEPLVKILTHLSAVKGIAVDDQGNYMATTGLDRKCRIWDVRMFRQLHAYSLPFGVSNVAISQKMNVACAVGNHVQVFRGMHNGTCKEPYLVHNCGGVVTDLRFVPWEDVLGIGHAGGFTSMLVPGAGDPNVDTLRSNPYETKSQRKEREIKQLLDKIQPELISLNPDDINKVNEGLLELEEEERKKILYIRPMAVQYTPRHKMRSKKSGWKMEARKNIVKDQIRMERNMEKHAVEKEVFEAPEVDDEAPKKKHILDRLK.

The disordered stretch occupies residues 34-108; it reads SWKEYKKMKQ…QQEKMKVTKD (75 aa). 2 stretches are compositionally biased toward basic and acidic residues: residues 64-85 and 98-108; these read TEGR…HDTG and LQQEKMKVTKD. 6 WD repeats span residues 193 to 234, 235 to 272, 274 to 312, 315 to 354, 357 to 396, and 399 to 436; these read AALD…YTYV, YDNL…NSFL, YVDV…HTNG, SLWS…GLDR, RIWD…NHVQ, and RGMH…IGHA.

In terms of assembly, part of the small subunit (SSU) processome.

The protein resides in the nucleus. The protein localises to the nucleolus. In terms of biological role, scaffold component of the nucleolar structure. Part of the small subunit (SSU) processome, first precursor of the small eukaryotic ribosomal subunit. Required for 18S rRNA processing. Plays a role in negative regulation of detoxification genes by inhibiting protein levels of transcription factor skn-1, leading to down-regulation of skn-1 target genes. This Caenorhabditis elegans protein is WD repeat-containing protein 46.